The sequence spans 85 residues: Small ribosomal subunit protein uS17 (85 aa).

This sequence belongs to the universal ribosomal protein uS17 family. In terms of assembly, part of the 30S ribosomal subunit.

Its function is as follows. One of the primary rRNA binding proteins, it binds specifically to the 5'-end of 16S ribosomal RNA. This is Small ribosomal subunit protein uS17 from Mycoplasmoides gallisepticum (strain R(low / passage 15 / clone 2)) (Mycoplasma gallisepticum).